We begin with the raw amino-acid sequence, 301 residues long: Tyrosine recombinase XerC (301 aa).

The Core-binding (CB) domain occupies threonine 2–tyrosine 84. The region spanning alanine 105 to aspartate 291 is the Tyr recombinase domain. Active-site residues include arginine 145, lysine 169, histidine 243, arginine 246, and histidine 269. The active-site O-(3'-phospho-DNA)-tyrosine intermediate is tyrosine 278.

Belongs to the 'phage' integrase family. XerC subfamily. In terms of assembly, forms a cyclic heterotetrameric complex composed of two molecules of XerC and two molecules of XerD.

It localises to the cytoplasm. In terms of biological role, site-specific tyrosine recombinase, which acts by catalyzing the cutting and rejoining of the recombining DNA molecules. The XerC-XerD complex is essential to convert dimers of the bacterial chromosome into monomers to permit their segregation at cell division. It also contributes to the segregational stability of plasmids. In Thermodesulfovibrio yellowstonii (strain ATCC 51303 / DSM 11347 / YP87), this protein is Tyrosine recombinase XerC.